The sequence spans 452 residues: uncharacterized protein (452 aa).

The N-terminal stretch at 1 to 20 (MQFFGSLFVSLLGAAGLANA) is a signal peptide. The tract at residues 130–151 (TQSSSNSTSTMNSTGSVSGGSV) is disordered.

The protein localises to the endoplasmic reticulum. This is an uncharacterized protein from Schizosaccharomyces pombe (strain 972 / ATCC 24843) (Fission yeast).